A 336-amino-acid polypeptide reads, in one-letter code: Probable allantoicase 2 (336 aa).

The protein belongs to the allantoicase family.

The enzyme catalyses allantoate + H2O = (S)-ureidoglycolate + urea. It functions in the pathway nitrogen metabolism; (S)-allantoin degradation; (S)-ureidoglycolate from allantoate (aminidohydrolase route): step 1/1. In Burkholderia pseudomallei (strain K96243), this protein is Probable allantoicase 2.